Consider the following 311-residue polypeptide: Aldose reductase B (311 aa).

Position 13–23 (13–23) interacts with NADP(+); it reads DIHHIPMIGLG. The active-site Proton donor is Tyr54. Substrate is bound at residue His116. Residue 219–273 coordinates NADP(+); sequence SPLGQGKCDLLSNETLKSIADKHNKTVANVIFKWLNQRGIVTIPKSSNPARIIEN.

The protein belongs to the aldo/keto reductase family.

It catalyses the reaction an alditol + NAD(+) = an aldose + NADH + H(+). The enzyme catalyses an alditol + NADP(+) = an aldose + NADPH + H(+). Catalyzes the NADPH-dependent reduction of a wide variety of carbonyl-containing compounds to their corresponding alcohols with a broad range of catalytic efficiencies. This is Aldose reductase B (alrB) from Dictyostelium discoideum (Social amoeba).